Here is a 108-residue protein sequence, read N- to C-terminus: Nucleoid-associated protein Bmul_1447/BMULJ_01796 (108 aa).

Residues 84–108 (EATSQEKMSGMTSGLPLPPGFKLPF) form a disordered region. A compositionally biased stretch (polar residues) spans 85 to 95 (ATSQEKMSGMT). Residues 99-108 (PLPPGFKLPF) show a composition bias toward pro residues.

The protein belongs to the YbaB/EbfC family. As to quaternary structure, homodimer.

The protein localises to the cytoplasm. It localises to the nucleoid. Binds to DNA and alters its conformation. May be involved in regulation of gene expression, nucleoid organization and DNA protection. The polypeptide is Nucleoid-associated protein Bmul_1447/BMULJ_01796 (Burkholderia multivorans (strain ATCC 17616 / 249)).